The sequence spans 249 residues: MIRILVSNDDGVNAPGIRALTEALAEIATVMTVAPDRNCSGASNSLTLTNPLRINRLDNGYISVHGTPTDCVHLAIRELCDGEPDMVVSGINAGANMGDDTLYSGTVAAAMEGRFLGFPAVAISLNGKALKHYHTAAVYARRIVQGLLAHPIASDQILNINVPDLPLDEIKGIRVTRLGARHKAEGIVRTQDPAGKEIFWLGPPGVEQDASEGTDFHAVAHGYVSITPLTVDLTAHRQLSVLQDWVDKI.

Positions 9, 10, 40, and 92 each coordinate a divalent metal cation.

It belongs to the SurE nucleotidase family. A divalent metal cation is required as a cofactor.

The protein resides in the cytoplasm. The enzyme catalyses a ribonucleoside 5'-phosphate + H2O = a ribonucleoside + phosphate. Its function is as follows. Nucleotidase that shows phosphatase activity on nucleoside 5'-monophosphates. The protein is 5'-nucleotidase SurE of Shewanella sp. (strain ANA-3).